The following is a 521-amino-acid chain: Bifunctional purine biosynthesis protein PurH (521 aa).

Residues 1–145 (MIKQALISVS…KNHRDVTVVV (145 aa)) form the MGS-like domain.

The protein belongs to the PurH family.

It catalyses the reaction (6R)-10-formyltetrahydrofolate + 5-amino-1-(5-phospho-beta-D-ribosyl)imidazole-4-carboxamide = 5-formamido-1-(5-phospho-D-ribosyl)imidazole-4-carboxamide + (6S)-5,6,7,8-tetrahydrofolate. The catalysed reaction is IMP + H2O = 5-formamido-1-(5-phospho-D-ribosyl)imidazole-4-carboxamide. It functions in the pathway purine metabolism; IMP biosynthesis via de novo pathway; 5-formamido-1-(5-phospho-D-ribosyl)imidazole-4-carboxamide from 5-amino-1-(5-phospho-D-ribosyl)imidazole-4-carboxamide (10-formyl THF route): step 1/1. It participates in purine metabolism; IMP biosynthesis via de novo pathway; IMP from 5-formamido-1-(5-phospho-D-ribosyl)imidazole-4-carboxamide: step 1/1. This is Bifunctional purine biosynthesis protein PurH from Burkholderia lata (strain ATCC 17760 / DSM 23089 / LMG 22485 / NCIMB 9086 / R18194 / 383).